A 426-amino-acid polypeptide reads, in one-letter code: Protein BTN1 (426 aa).

A signal peptide spans 1-32; sequence MFIISETQRTFASFFIFGLLNNILYVIILSAA. 10 helical membrane-spanning segments follow: residues 44-64, 67-87, 99-119, 129-149, 154-174, 243-263, 290-310, 318-338, 340-360, and 384-404; these read IVLL…PFFI, VPYI…MVLI, ILGI…FLQL, IGGF…LFMV, MGFP…GFII, ITPL…SEYV, IYVV…SSVT, LYLL…QSIY, LPFH…LLGG, and GCVS…NWWL.

It belongs to the battenin family.

It is found in the vacuole membrane. Functionally, involved in vacuolar transport and vacuole pH homeostasis. Also required for cytokinesis. In Candida albicans (strain SC5314 / ATCC MYA-2876) (Yeast), this protein is Protein BTN1 (BTN1).